Reading from the N-terminus, the 265-residue chain is Phosphonates import ATP-binding protein PhnC 1 (265 aa).

The region spanning 3 to 247 (LRLSAIDLRH…HLDTLYANEQ (245 aa)) is the ABC transporter domain. 36–43 (GPSGAGKT) lines the ATP pocket.

Belongs to the ABC transporter superfamily. Phosphonates importer (TC 3.A.1.9.1) family. As to quaternary structure, the complex is composed of two ATP-binding proteins (PhnC), two transmembrane proteins (PhnE) and a solute-binding protein (PhnD).

It is found in the cell inner membrane. It catalyses the reaction phosphonate(out) + ATP + H2O = phosphonate(in) + ADP + phosphate + H(+). Part of the ABC transporter complex PhnCDE involved in phosphonates import. Responsible for energy coupling to the transport system. The chain is Phosphonates import ATP-binding protein PhnC 1 from Pseudomonas syringae pv. tomato (strain ATCC BAA-871 / DC3000).